The sequence spans 109 residues: Putative pterin-4-alpha-carbinolamine dehydratase (109 aa).

The protein belongs to the pterin-4-alpha-carbinolamine dehydratase family.

It catalyses the reaction (4aS,6R)-4a-hydroxy-L-erythro-5,6,7,8-tetrahydrobiopterin = (6R)-L-erythro-6,7-dihydrobiopterin + H2O. The polypeptide is Putative pterin-4-alpha-carbinolamine dehydratase (Halorhodospira halophila (strain DSM 244 / SL1) (Ectothiorhodospira halophila (strain DSM 244 / SL1))).